The following is a 90-amino-acid chain: DNA-binding protein HU-beta (90 aa).

It belongs to the bacterial histone-like protein family. In terms of assembly, heterodimer of an alpha and a beta chain.

Its function is as follows. Histone-like DNA-binding protein which is capable of wrapping DNA to stabilize it, and thus to prevent its denaturation under extreme environmental conditions. In Pseudomonas fluorescens (strain ATCC BAA-477 / NRRL B-23932 / Pf-5), this protein is DNA-binding protein HU-beta (hupB).